The sequence spans 27 residues: Equinin A (27 aa).

Positions 1–13 are enriched in basic and acidic residues; it reads AVDKGGGKAEKKD. The segment at 1–27 is disordered; the sequence is AVDKGGGKAEKKDGNRKKKLAGGEGGG.

Its subcellular location is the secreted. Functionally, peptide with unknown function. Does not show antimicrobial and hemolytic activities. The chain is Equinin A from Actinia equina (Beadlet anemone).